Reading from the N-terminus, the 515-residue chain is MECDLMETDILESLEDLGYKGPLLDDGALLQAVSAGAASPEFTKLCAWLVSELRVLCKLEENVQATNSPSEAEEFQLEVSGLLGEMNCPYPCLTSGDVTKRLLVQKNCLLLLTYLISELEAARMLCVNAPPKKAQEGGGSEVFQELKGICIALGMSKPPANITMFQFFSGIEKKLKETLAKVPPNHVGKPLLKKSMGPAHWEKIEAINQAIANEYEVRRKLLIKRLDVTVQSFGWSDRAKSQTEKLAKVYQPKRSVLSPKGNISIAHLLAARQDLSKILRTSSGSIREKTACAINKVLMGRVPDRGGRPNEIEPPPPEMPPWQKRQDGPQQQAGGRGGGRGGYEHSSYGGRGGHEQGGRGGRGGYDHGGRGGGRGNKHQGGWTDGGSASGGGYQDGGYRDPGFQPGGYHGGHSSGYQGGGYGGFQTSSYTGSGYQGGGYQQDNRYQDGGHHGERGSGRGGRGGRGGRGGRGSQGGGWGGRGSQTYHQGGQFEQHFQHGGYQYSHSGFGQGRHYTS.

2 disordered regions span residues Val-297–Gly-411 and Ser-432–Ser-515. The segment covering Val-302–Glu-311 has biased composition (basic and acidic residues). Gly residues predominate over residues Trp-382–Asp-395. Residues Arg-444–Ser-456 show a composition bias toward basic and acidic residues. Positions Gly-457–Gly-481 are enriched in gly residues. Residues Tyr-485–Gln-501 show a composition bias toward low complexity. The segment covering Tyr-502–Ser-515 has biased composition (polar residues).

This sequence belongs to the FAM98 family. In terms of assembly, interacts (via N- and C-terminus) with DDX1. Interacts (via N- and C-terminus) with C14orf166. Interacts with FAM98B. Interacts with PLEKHM1 (via N- and C-terminus).

Its function is as follows. Positively stimulates PRMT1-induced protein arginine methylation. Involved in skeletal homeostasis. Positively regulates lysosome peripheral distribution and ruffled border formation in osteoclasts. This chain is Protein FAM98A, found in Rattus norvegicus (Rat).